We begin with the raw amino-acid sequence, 147 residues long: Ribonuclease 4 (147 aa).

An N-terminal signal peptide occupies residues Met1 to Gly28. A Pyrrolidone carboxylic acid modification is found at Gln29. The dUMP site is built by Arg35, His40, Lys68, Asn71, and Thr72. His40 acts as the Proton acceptor in catalysis. Cystine bridges form between Cys53–Cys109, Cys67–Cys120, Cys85–Cys135, and Cys92–Cys99. The Proton donor role is filled by His144. Residue Phe145 coordinates dUMP.

The protein belongs to the pancreatic ribonuclease family.

The protein localises to the secreted. Cleaves preferentially after uridine bases. Has antimicrobial activity against uropathogenic E.coli (UPEC). Probably contributes to urinary tract sterility. The chain is Ribonuclease 4 (Rnase4) from Rattus norvegicus (Rat).